Reading from the N-terminus, the 458-residue chain is ATP synthase subunit beta (458 aa).

148 to 155 is a binding site for ATP; it reads GGAGVGKT.

The protein belongs to the ATPase alpha/beta chains family. As to quaternary structure, F-type ATPases have 2 components, CF(1) - the catalytic core - and CF(0) - the membrane proton channel. CF(1) has five subunits: alpha(3), beta(3), gamma(1), delta(1), epsilon(1). CF(0) has three main subunits: a(1), b(2) and c(9-12). The alpha and beta chains form an alternating ring which encloses part of the gamma chain. CF(1) is attached to CF(0) by a central stalk formed by the gamma and epsilon chains, while a peripheral stalk is formed by the delta and b chains.

It localises to the cell inner membrane. The enzyme catalyses ATP + H2O + 4 H(+)(in) = ADP + phosphate + 5 H(+)(out). Its function is as follows. Produces ATP from ADP in the presence of a proton gradient across the membrane. The catalytic sites are hosted primarily by the beta subunits. This chain is ATP synthase subunit beta, found in Pseudomonas putida (strain ATCC 700007 / DSM 6899 / JCM 31910 / BCRC 17059 / LMG 24140 / F1).